Here is a 316-residue protein sequence, read N- to C-terminus: Porphobilinogen deaminase (316 aa).

S-(dipyrrolylmethanemethyl)cysteine is present on cysteine 240.

The protein belongs to the HMBS family. As to quaternary structure, monomer. It depends on dipyrromethane as a cofactor.

The catalysed reaction is 4 porphobilinogen + H2O = hydroxymethylbilane + 4 NH4(+). It participates in porphyrin-containing compound metabolism; protoporphyrin-IX biosynthesis; coproporphyrinogen-III from 5-aminolevulinate: step 2/4. Tetrapolymerization of the monopyrrole PBG into the hydroxymethylbilane pre-uroporphyrinogen in several discrete steps. This chain is Porphobilinogen deaminase, found in Alkaliphilus metalliredigens (strain QYMF).